The sequence spans 343 residues: Protein RecA (343 aa).

65 to 72 (GPESSGKT) lines the ATP pocket.

It belongs to the RecA family.

It is found in the cytoplasm. Its function is as follows. Can catalyze the hydrolysis of ATP in the presence of single-stranded DNA, the ATP-dependent uptake of single-stranded DNA by duplex DNA, and the ATP-dependent hybridization of homologous single-stranded DNAs. It interacts with LexA causing its activation and leading to its autocatalytic cleavage. In Campylobacter jejuni subsp. doylei (strain ATCC BAA-1458 / RM4099 / 269.97), this protein is Protein RecA.